Here is a 30-residue protein sequence, read N- to C-terminus: Photosystem I reaction center subunit XII (30 aa).

A helical membrane pass occupies residues 7 to 26; it reads IFVALLFALVSAVLAIRLGK.

This sequence belongs to the PsaM family.

It is found in the plastid. It localises to the chloroplast thylakoid membrane. In Porphyra purpurea (Red seaweed), this protein is Photosystem I reaction center subunit XII.